Here is a 335-residue protein sequence, read N- to C-terminus: Dihydroorotate dehydrogenase (quinone) (335 aa).

FMN contacts are provided by residues 59–63 (AGLDK) and Thr-83. Residue Lys-63 coordinates substrate. 108 to 112 (NRMGF) provides a ligand contact to substrate. FMN contacts are provided by Asn-136 and Asn-169. Asn-169 is a substrate binding site. The active-site Nucleophile is the Ser-172. Asn-174 is a binding site for substrate. Lys-214 and Thr-242 together coordinate FMN. Residue 243–244 (NT) participates in substrate binding. FMN contacts are provided by residues Gly-265, Gly-294, and 315–316 (YS).

The protein belongs to the dihydroorotate dehydrogenase family. Type 2 subfamily. Monomer. Requires FMN as cofactor.

The protein resides in the cell membrane. It carries out the reaction (S)-dihydroorotate + a quinone = orotate + a quinol. The protein operates within pyrimidine metabolism; UMP biosynthesis via de novo pathway; orotate from (S)-dihydroorotate (quinone route): step 1/1. Its function is as follows. Catalyzes the conversion of dihydroorotate to orotate with quinone as electron acceptor. This Neisseria meningitidis serogroup C / serotype 2a (strain ATCC 700532 / DSM 15464 / FAM18) protein is Dihydroorotate dehydrogenase (quinone).